A 443-amino-acid polypeptide reads, in one-letter code: Type I restriction enzyme HindI methylase subunit (443 aa).

S-adenosyl-L-methionine-binding positions include 117-122, 146-148, and Glu-173; these read QYFTPK and SGG.

This sequence belongs to the N(4)/N(6)-methyltransferase family. As to quaternary structure, the type I restriction/modification system is composed of three polypeptides R, M and S; the restriction enzyme has stoichiometry R(2)M(2)S(1) while the methyltransferase is M(2)S(1).

The catalysed reaction is a 2'-deoxyadenosine in DNA + S-adenosyl-L-methionine = an N(6)-methyl-2'-deoxyadenosine in DNA + S-adenosyl-L-homocysteine + H(+). Functionally, the subtype gamma methyltransferase (M) subunit of a type I restriction enzyme. The M and S subunits together form a methyltransferase (MTase) that methylates adenosines in the sequence 5'-RAACN(5)TAG-3'. Methylation protects against cleavage by HindI. In the presence of the R subunit the complex can also act as an endonuclease, binding to the same target sequence but cutting the DNA some distance from this site. Whether the DNA is cut or modified depends on the methylation state of the target sequence. When the target site is unmodified, the DNA is cut. When the target site is hemimethylated, the complex acts as a maintenance MTase modifying the DNA so that both strands become methylated. After locating a non-methylated recognition site, the enzyme complex serves as a molecular motor that translocates DNA in an ATP-dependent manner until a collision occurs that triggers cleavage. The polypeptide is Type I restriction enzyme HindI methylase subunit (Haemophilus influenzae (strain ATCC 51907 / DSM 11121 / KW20 / Rd)).